Consider the following 357-residue polypeptide: Trans-enoyl reductase resD (357 aa).

Tyrosine 211 contributes to the NADP(+) binding site.

Belongs to the zinc-containing alcohol dehydrogenase family.

It functions in the pathway antifungal biosynthesis. Trans-enoyl reductase; part of the gene cluster that mediates the biosynthesis of the tetrahydropyranyl antifungal agent restricticin that acts as an inhibitor of CYP51 and blocks the ergosterol biosynthesis. The highly reducing polyketide synthase resH, the short chain dehydrogenase resG, the cyclase resF, the FAD-dependent monooxygenase resA and the enoylreductase resD are required to generate the first stable intermediate desmethylrestrictinol. ResH with resD biosynthesize the first polyketide chain intermediate that is reduced by resG, followed by epoxidation by resA before 6-endo cyclization via epoxide opening by resF leads to desmethylrestrictinol. The methyltransferase resE then catalyzes the C4 O-methylation of desmethylrestrictinol to produce restrictinol, and the nonribosomal peptide synthetase resC catalyzes the C3 esterification of restrictinol with glycine that leads to restricticin. The sequence is that of Trans-enoyl reductase resD from Aspergillus sclerotiorum.